Here is a 396-residue protein sequence, read N- to C-terminus: Apolipoprotein A-IV (396 aa).

An N-terminal signal peptide occupies residues 1–20; the sequence is MFLKAVVLTLALVAVAGARA. 13 repeat units span residues 33–54, 60–81, 82–103, 115–136, 137–158, 159–180, 181–202, 203–224, 225–246, 247–268, 269–286, 287–308, and 309–330. The segment at 33 to 330 is 13 X 22 AA approximate tandem repeats; it reads DYFSQLSNNA…QMEQLRQKLG (298 aa). A disordered region spans residues 361–396; it reads KESQDKTLSLPELEQQQEQQQEQQQEQVQMLAPLES. The segment covering 374-389 has biased composition (low complexity); that stretch reads EQQQEQQQEQQQEQVQ.

It belongs to the apolipoprotein A1/A4/E family. As to quaternary structure, homodimer. In terms of processing, phosphorylation sites are present in the extracellular medium. Synthesized primarily in the intestine and secreted in plasma.

The protein localises to the secreted. Functionally, may have a role in chylomicrons and VLDL secretion and catabolism. Required for efficient activation of lipoprotein lipase by ApoC-II; potent activator of LCAT. Apoa-IV is a major component of HDL and chylomicrons. This Homo sapiens (Human) protein is Apolipoprotein A-IV.